A 589-amino-acid polypeptide reads, in one-letter code: DNA ligase (589 aa).

ATP is bound at residue Glu250. The active-site N6-AMP-lysine intermediate is the Lys252. ATP is bound by residues Arg257, Arg272, Glu302, Phe342, Arg417, and Lys423.

The protein belongs to the ATP-dependent DNA ligase family. Mg(2+) serves as cofactor.

The enzyme catalyses ATP + (deoxyribonucleotide)n-3'-hydroxyl + 5'-phospho-(deoxyribonucleotide)m = (deoxyribonucleotide)n+m + AMP + diphosphate.. In terms of biological role, DNA ligase that seals nicks in double-stranded DNA during DNA replication, DNA recombination and DNA repair. This Cenarchaeum symbiosum (strain A) protein is DNA ligase.